Reading from the N-terminus, the 278-residue chain is ATP synthase subunit a (278 aa).

The next 6 membrane-spanning stretches (helical) occupy residues 41-61 (FLNIDSLFFSFFLGIIFLLFF), 108-128 (LTIFVWLFLMNLMDLIPVDFV), 149-168 (INITLSMSLGVFLLILYFGI), 180-200 (FFFQPFNNYLLIPVNLVLELI), 222-242 (LIFILISGLLPWWLQWILSVP), and 244-264 (AIFHILIIILQAFIFMILTII).

It belongs to the ATPase A chain family. In terms of assembly, F-type ATPases have 2 components, CF(1) - the catalytic core - and CF(0) - the membrane proton channel. CF(1) has five subunits: alpha(3), beta(3), gamma(1), delta(1), epsilon(1). CF(0) has three main subunits: a(1), b(2) and c(9-12). The alpha and beta chains form an alternating ring which encloses part of the gamma chain. CF(1) is attached to CF(0) by a central stalk formed by the gamma and epsilon chains, while a peripheral stalk is formed by the delta and b chains.

Its subcellular location is the cell membrane. Its function is as follows. Key component of the proton channel; it plays a direct role in the translocation of protons across the membrane. The protein is ATP synthase subunit a of Wigglesworthia glossinidia brevipalpis.